The chain runs to 215 residues: Pyrophosphatase PpaX (215 aa).

Residue D9 is the Nucleophile of the active site.

The protein belongs to the HAD-like hydrolase superfamily. PpaX family. Mg(2+) is required as a cofactor.

The enzyme catalyses diphosphate + H2O = 2 phosphate + H(+). Its function is as follows. Hydrolyzes pyrophosphate formed during P-Ser-HPr dephosphorylation by HPrK/P. Might play a role in controlling the intracellular pyrophosphate pool. The polypeptide is Pyrophosphatase PpaX (Bacillus mycoides (strain KBAB4) (Bacillus weihenstephanensis)).